The sequence spans 169 residues: ATP synthase subunit b (169 aa).

The chain crosses the membrane as a helical span at residues 12-32 (HIYLGNAIWYLLCFAILMLLI).

This sequence belongs to the ATPase B chain family. As to quaternary structure, F-type ATPases have 2 components, F(1) - the catalytic core - and F(0) - the membrane proton channel. F(1) has five subunits: alpha(3), beta(3), gamma(1), delta(1), epsilon(1). F(0) has three main subunits: a(1), b(2) and c(10-14). The alpha and beta chains form an alternating ring which encloses part of the gamma chain. F(1) is attached to F(0) by a central stalk formed by the gamma and epsilon chains, while a peripheral stalk is formed by the delta and b chains.

It localises to the cell membrane. Its activity is regulated as follows. Increases 2-fold following exposure to low pH. F(1)F(0) ATP synthase produces ATP from ADP in the presence of a proton or sodium gradient. F-type ATPases consist of two structural domains, F(1) containing the extramembraneous catalytic core and F(0) containing the membrane proton channel, linked together by a central stalk and a peripheral stalk. During catalysis, ATP synthesis in the catalytic domain of F(1) is coupled via a rotary mechanism of the central stalk subunits to proton translocation. In terms of biological role, component of the F(0) channel, it forms part of the peripheral stalk, linking F(1) to F(0). This Lactobacillus acidophilus (strain ATCC 700396 / NCK56 / N2 / NCFM) protein is ATP synthase subunit b.